We begin with the raw amino-acid sequence, 285 residues long: NAD kinase (285 aa).

The Proton acceptor role is filled by Asp68. NAD(+) contacts are provided by residues Asp68–Gly69, Asn142–Asp143, Arg153, Lys170, Asp172, Thr183–Ser188, and Gln242.

The protein belongs to the NAD kinase family. It depends on a divalent metal cation as a cofactor.

The protein localises to the cytoplasm. It carries out the reaction NAD(+) + ATP = ADP + NADP(+) + H(+). In terms of biological role, involved in the regulation of the intracellular balance of NAD and NADP, and is a key enzyme in the biosynthesis of NADP. Catalyzes specifically the phosphorylation on 2'-hydroxyl of the adenosine moiety of NAD to yield NADP. The chain is NAD kinase from Syntrophotalea carbinolica (strain DSM 2380 / NBRC 103641 / GraBd1) (Pelobacter carbinolicus).